Consider the following 221-residue polypeptide: Anti-sigma-W factor RsiW (221 aa).

Residues 1-87 lie on the Cytoplasmic side of the membrane; the sequence is MKTCHSHDEL…AKWKLKAKRH (87 aa). The Zn(2+) site is built by His-30, Cys-34, and Cys-37. A helical transmembrane segment spans residues 88–108; it reads PILVAAAIFLIMMSAAFFSAW. At 109 to 221 the chain is on the extracellular side; it reads SHTTDGIAVS…GEDDPHSTDN (113 aa).

The protein belongs to the zinc-associated anti-sigma factor (ZAS) superfamily. Anti-sigma-W factor family. The cofactor is Zn(2+). Post-translationally, is processed by three successive proteolytic events. First, the extracellular region of RsiW is cleaved by PrsW (Site-1 cleavage) in response to cell envelope stresses. Next, it undergoes cleavage at an intramembrane site (Site-2 cleavage) mediated by RasP. This cleavage uncovers a cryptic proteolytic tag with conserved alanine residues in the transmembrane segment, that is recognized mainly by the ClpXP protease, which completely degrades the protein in the cytoplasm and leads to the induction of the sigma-W-controlled genes.

The protein localises to the membrane. Is the anti-sigma factor for SigW. The presence of RsiW leads to the inactivation of SigW, and its proteolytic destruction to sigma-W activation. The chain is Anti-sigma-W factor RsiW (rsiW) from Shouchella clausii (strain KSM-K16) (Alkalihalobacillus clausii).